The following is a 609-amino-acid chain: UvrABC system protein C (609 aa).

The region spanning 16-94 (SSAGVYRMYD…IKQYMPKYNV (79 aa)) is the GIY-YIG domain. The 36-residue stretch at 203-238 (QQVISALVDKMELAAERQAYEQAARFRDQIMALRKV) folds into the UVR domain.

The protein belongs to the UvrC family. As to quaternary structure, interacts with UvrB in an incision complex.

It is found in the cytoplasm. Its function is as follows. The UvrABC repair system catalyzes the recognition and processing of DNA lesions. UvrC both incises the 5' and 3' sides of the lesion. The N-terminal half is responsible for the 3' incision and the C-terminal half is responsible for the 5' incision. This is UvrABC system protein C from Shewanella baltica (strain OS185).